The primary structure comprises 278 residues: 3-oxoacyl-[acyl-carrier-protein] reductase (278 aa).

Residues Thr13, Arg14, Ile16, Ser36, Ser40, Thr44, Asp66, Phe67, Glu77, Gly122, Gln125, and Glu126 each coordinate NADP(+). Residue Ser182 is the Proton donor of the active site. Residues Tyr198, Lys202, Leu230, and Val231 each coordinate NADP(+). Tyr198 serves as the catalytic Proton acceptor. The Lowers pKa of active site Tyr role is filled by Lys202.

It belongs to the short-chain dehydrogenases/reductases (SDR) family.

The protein resides in the mitochondrion. The catalysed reaction is a (3R)-hydroxyacyl-[ACP] + NADP(+) = a 3-oxoacyl-[ACP] + NADPH + H(+). It participates in lipid metabolism; fatty acid biosynthesis. Its function is as follows. Involved in biosynthesis of fatty acids in mitochondria. The sequence is that of 3-oxoacyl-[acyl-carrier-protein] reductase (OAR1) from Saccharomyces cerevisiae (strain ATCC 204508 / S288c) (Baker's yeast).